Here is an 83-residue protein sequence, read N- to C-terminus: uncharacterized protein (83 aa).

A helical membrane pass occupies residues 24-44 (AMTLLIITNTLLIILSYSVLL).

It localises to the host membrane. This is an uncharacterized protein from Acidianus sp. F28 (AFV-2).